The sequence spans 128 residues: uncharacterized protein (128 aa).

3 helical membrane-spanning segments follow: residues 1 to 21 (MLVF…LIFL), 51 to 71 (VRVE…AILG), and 76 to 96 (ANFL…VYYV).

Its subcellular location is the membrane. This is an uncharacterized protein from Saccharomyces cerevisiae (strain ATCC 204508 / S288c) (Baker's yeast).